A 403-amino-acid polypeptide reads, in one-letter code: S-adenosylmethionine synthase (403 aa).

His-15 contacts ATP. Asp-17 provides a ligand contact to Mg(2+). Glu-43 is a binding site for K(+). 2 residues coordinate L-methionine: Glu-56 and Gln-99. Residues 99-109 (QSPHIAQGVDR) are flexible loop. ATP-binding positions include 166–168 (DAK), 232–233 (KF), Asp-241, 247–248 (RK), Ala-264, and Lys-268. Asp-241 lines the L-methionine pocket. L-methionine is bound at residue Lys-272.

Belongs to the AdoMet synthase family. Homotetramer; dimer of dimers. Requires Mg(2+) as cofactor. It depends on K(+) as a cofactor.

Its subcellular location is the cytoplasm. The enzyme catalyses L-methionine + ATP + H2O = S-adenosyl-L-methionine + phosphate + diphosphate. The protein operates within amino-acid biosynthesis; S-adenosyl-L-methionine biosynthesis; S-adenosyl-L-methionine from L-methionine: step 1/1. Its function is as follows. Catalyzes the formation of S-adenosylmethionine (AdoMet) from methionine and ATP. The overall synthetic reaction is composed of two sequential steps, AdoMet formation and the subsequent tripolyphosphate hydrolysis which occurs prior to release of AdoMet from the enzyme. In Stenotrophomonas maltophilia (strain K279a), this protein is S-adenosylmethionine synthase.